A 515-amino-acid polypeptide reads, in one-letter code: Cytidine and dCMP deaminase domain-containing protein 1 (515 aa).

Composition is skewed to polar residues over residues 1 to 11 and 18 to 27; these read MKEAGQMQNLE and SVSTQTGSMT. 2 disordered regions span residues 1 to 27 and 56 to 83; these read MKEA…GSMT and RQKS…STDK. The span at 60–83 shows a compositional bias: basic and acidic residues; it reads QKNEEGKHGPLGDNEEMTRVSTDK. One can recognise a CMP/dCMP-type deaminase 1 domain in the interval 71 to 169; the sequence is GDNEEMTRVS…SLLTEASSSE (99 aa). Histidine 110, cysteine 135, and cysteine 138 together coordinate Zn(2+). A Nuclear export signal motif is present at residues 272-284; sequence NLRQNMKDLILLL. In terms of domain architecture, CMP/dCMP-type deaminase 2 spans 318–483; sequence EIARHCMVQA…LNPSEAYGLE (166 aa). Histidine 399 provides a ligand contact to Zn(2+). Glutamate 401 acts as the Proton donor in catalysis. Residues cysteine 427 and cysteine 430 each coordinate Zn(2+). The disordered stretch occupies residues 481–515; sequence GLEQNEPERRENGVLRPVPQKEEQHQDKKLRLGIH. Residues 486-515 show a composition bias toward basic and acidic residues; sequence EPERRENGVLRPVPQKEEQHQDKKLRLGIH. A Bipartite nuclear localization signal motif is present at residues 489–511; that stretch reads RRENGVLRPVPQKEEQHQDKKLR.

The protein belongs to the cytidine and deoxycytidylate deaminase family. Zn(2+) serves as cofactor.

Its subcellular location is the cytoplasm. It localises to the nucleus. The catalysed reaction is 2'-deoxycytidine + H2O + H(+) = 2'-deoxyuridine + NH4(+). It carries out the reaction cytidine + H2O + H(+) = uridine + NH4(+). Catalyzes the deamination of cytidine and deoxycytidine into uridine and deoxyuridine, respectively. May play an important role in testicular development and spermatogenesis. The sequence is that of Cytidine and dCMP deaminase domain-containing protein 1 (CDADC1) from Macaca fascicularis (Crab-eating macaque).